Reading from the N-terminus, the 209-residue chain is Imidazole glycerol phosphate synthase subunit HisH (209 aa).

Positions K3 to K209 constitute a Glutamine amidotransferase type-1 domain. The Nucleophile role is filled by C81. Residues H190 and E192 contribute to the active site.

As to quaternary structure, heterodimer of HisH and HisF.

The protein localises to the cytoplasm. The catalysed reaction is 5-[(5-phospho-1-deoxy-D-ribulos-1-ylimino)methylamino]-1-(5-phospho-beta-D-ribosyl)imidazole-4-carboxamide + L-glutamine = D-erythro-1-(imidazol-4-yl)glycerol 3-phosphate + 5-amino-1-(5-phospho-beta-D-ribosyl)imidazole-4-carboxamide + L-glutamate + H(+). The enzyme catalyses L-glutamine + H2O = L-glutamate + NH4(+). Its pathway is amino-acid biosynthesis; L-histidine biosynthesis; L-histidine from 5-phospho-alpha-D-ribose 1-diphosphate: step 5/9. IGPS catalyzes the conversion of PRFAR and glutamine to IGP, AICAR and glutamate. The HisH subunit catalyzes the hydrolysis of glutamine to glutamate and ammonia as part of the synthesis of IGP and AICAR. The resulting ammonia molecule is channeled to the active site of HisF. The polypeptide is Imidazole glycerol phosphate synthase subunit HisH (Geobacter sulfurreducens (strain ATCC 51573 / DSM 12127 / PCA)).